The following is a 190-amino-acid chain: Lipid A acyltransferase PagP (190 aa).

Positions 1–29 (MYVAMIIRKYFLIIALLLMPWLAIPSVSA) are cleaved as a signal peptide. Active-site residues include histidine 62, aspartate 105, and serine 106.

This sequence belongs to the lipid A palmitoyltransferase family. In terms of assembly, homodimer.

The protein resides in the cell outer membrane. It catalyses the reaction a lipid A + a 1,2-diacyl-sn-glycero-3-phosphocholine = a hepta-acyl lipid A + a 2-acyl-sn-glycero-3-phosphocholine. The catalysed reaction is a lipid IVA + a 1,2-diacyl-sn-glycero-3-phosphocholine = a lipid IVB + a 2-acyl-sn-glycero-3-phosphocholine. The enzyme catalyses a lipid IIA + a 1,2-diacyl-sn-glycero-3-phosphocholine = a lipid IIB + a 2-acyl-sn-glycero-3-phosphocholine. In terms of biological role, transfers a fatty acid residue from the sn-1 position of a phospholipid to the N-linked hydroxyfatty acid chain on the proximal unit of lipid A or its precursors. Required for resistance to cationic antimicrobial peptides (CAMPs). Modifications of lipid A with an acyl chain allow to evade host immune defenses by resisting antimicrobial peptides and attenuating the inflammatory response to infection triggered by lipopolysaccharide through the Toll-like receptor 4 (TLR4) signal transduction pathway. The sequence is that of Lipid A acyltransferase PagP from Salmonella typhimurium (strain LT2 / SGSC1412 / ATCC 700720).